Here is a 717-residue protein sequence, read N- to C-terminus: Transport/processing ATP-binding protein ComA (717 aa).

Residues 11–138 (QVDQMDCGVA…EEWTGVTLFM (128 aa)) form the Peptidase C39 domain. Cys-17 is a catalytic residue. 7 helical membrane passes run 18–38 (GVAS…LAHL), 166–186 (GLIA…IVGS), 205–225 (LGII…LSYA), 237–257 (LSID…MSFF), 281–301 (STIL…LVLF), 306–326 (NLFF…FAFM), and 397–417 (VAHL…VMDG). In terms of domain architecture, ABC transmembrane type-1 spans 168-450 (IANIVLATLL…IINLQTKLQT (283 aa)). The ABC transporter domain maps to 484-717 (MTFKQVHYKY…GGFYAHLVNS (234 aa)). 517 to 524 (GISGSGKT) contributes to the ATP binding site.

This sequence belongs to the ABC transporter superfamily. HlyB family.

The protein resides in the cell membrane. Its function is as follows. Required for induction of competence. Seems to transport the competence-stimulating peptide (CSP). The chain is Transport/processing ATP-binding protein ComA (comA) from Streptococcus pneumoniae (strain ATCC BAA-255 / R6).